The primary structure comprises 84 residues: MANHKSSLKRIRQEEKRRLHNRYYAKTMRNTVKKLRATTDKAEAVAMYPGVQKMLDKLAKTNIIHKNKAANLKSKLAAYISKLA.

This sequence belongs to the bacterial ribosomal protein bS20 family.

Functionally, binds directly to 16S ribosomal RNA. The polypeptide is Small ribosomal subunit protein bS20 (Phocaeicola vulgatus (strain ATCC 8482 / DSM 1447 / JCM 5826 / CCUG 4940 / NBRC 14291 / NCTC 11154) (Bacteroides vulgatus)).